The following is a 550-amino-acid chain: Membrane protein insertase YidC (550 aa).

The next 6 membrane-spanning stretches (helical) occupy residues 6–26, 333–353, 356–376, 430–450, 469–489, and 504–524; these read LVLF…WLKQ, VVDY…LSWI, VVGN…LMFF, LPIL…LGSV, PYFI…KLNP, and PVIF…YWVV.

The protein belongs to the OXA1/ALB3/YidC family. Type 1 subfamily. As to quaternary structure, interacts with the Sec translocase complex via SecD. Specifically interacts with transmembrane segments of nascent integral membrane proteins during membrane integration.

It localises to the cell inner membrane. In terms of biological role, required for the insertion and/or proper folding and/or complex formation of integral membrane proteins into the membrane. Involved in integration of membrane proteins that insert both dependently and independently of the Sec translocase complex, as well as at least some lipoproteins. Aids folding of multispanning membrane proteins. This chain is Membrane protein insertase YidC, found in Aromatoleum aromaticum (strain DSM 19018 / LMG 30748 / EbN1) (Azoarcus sp. (strain EbN1)).